The sequence spans 201 residues: Probable quinol oxidase subunit 3 (201 aa).

Helical transmembrane passes span 20 to 40, 62 to 82, 91 to 111, 133 to 153, and 172 to 192; these read LGFWIFLTAEFALFGTLFATL, LILIMTFALLISSYTCGIAIY, LMMFWMIITVILGLVFVGFEI, FFILLGTHGAHVSLGIVWVIC, and FIVSLYWHFLDVVWVFIFTAV.

This sequence belongs to the cytochrome c oxidase subunit 3 family.

Its subcellular location is the cell membrane. The catalysed reaction is 2 a quinol + O2 = 2 a quinone + 2 H2O. Catalyzes quinol oxidation with the concomitant reduction of oxygen to water. This Staphylococcus epidermidis (strain ATCC 35984 / DSM 28319 / BCRC 17069 / CCUG 31568 / BM 3577 / RP62A) protein is Probable quinol oxidase subunit 3 (qoxC).